Consider the following 744-residue polypeptide: Cullin-3 (744 aa).

The 60-residue stretch at 677–736 folds into the Cullin neddylation domain; that stretch reads MELSAIIVRIMKTEGKLSHQQLLERTTKRTQSRLSLTPSILKRSIQLLIEKEYIQRNADD. K688 is covalently cross-linked (Glycyl lysine isopeptide (Lys-Gly) (interchain with G-Cter in NEDD8)).

This sequence belongs to the cullin family. As to quaternary structure, component of a ubiquitin-protein ligase complex consisting of the cullin CUL3, the linker protein ELC1, the substrate receptor ELA1, and the RING protein HRT1. In terms of processing, neddylated; enhancing the ubiquitin-ligase activity.

It functions in the pathway protein modification; protein ubiquitination. In terms of biological role, as part of the CRL3 E3 ubiquitin ligase complex; polyubiquitylates monoubiquitylated RNA polymerase II subunit RPO21 to trigger its proteolysis; plays a role in global genomic repair. The polypeptide is Cullin-3 (CUL3) (Saccharomyces cerevisiae (strain ATCC 204508 / S288c) (Baker's yeast)).